Reading from the N-terminus, the 471-residue chain is Regulator of microtubule dynamics protein 3 (471 aa).

Over 1–12 (MSRLGALGGSRA) the chain is Mitochondrial intermembrane. Residues 13 to 35 (GLGLLLGTAAGLGFLCVLYSQRW) traverse the membrane as a helical segment. The Cytoplasmic portion of the chain corresponds to 36-471 (KRTQRHGRSQ…LEELEVILGK (436 aa)). A phosphoserine mark is found at Ser-44, Ser-46, Ser-50, and Ser-57. Residues 91-125 (LDRLDFVLTSLMALRREVEELQRSLQGLAGEIVGE) adopt a coiled-coil conformation. The short motif at 157-163 (VYFTASS) is the FFAT element. Position 160 is a phosphothreonine (Thr-160). The tract at residues 168–203 (TDAESEGGYTTANAESDYERDSDKESEDAEDEVSCE) is disordered. Phosphoserine occurs at positions 183, 193, 212, and 233. Positions 191–201 (KESEDAEDEVS) are enriched in acidic residues.

The protein belongs to the RMDN family. As to quaternary structure, interacts with PTPN2. Interacts with microtubules. Interacts with VAPB. Interacts (via FFAT motif) with MOSPD2 (via MSP domain). Interacts (via phosphorylated FFAT motif) with MOSPD2, VAPA and VAPB. In terms of processing, phosphorylation at Thr-160 of the FFAT motif activates interaction with MOSPD2, VAPA and VAPB.

Its subcellular location is the mitochondrion outer membrane. The protein localises to the cytoplasm. It localises to the nucleus. It is found in the cytoskeleton. The protein resides in the spindle. Its subcellular location is the spindle pole. In terms of biological role, involved in cellular calcium homeostasis regulation. May participate in differentiation and apoptosis of keratinocytes. Overexpression induces apoptosis. In Rattus norvegicus (Rat), this protein is Regulator of microtubule dynamics protein 3.